The following is a 405-amino-acid chain: Peroxisomal membrane protein PEX13 (405 aa).

The segment covering 1 to 11 has biased composition (pro residues); the sequence is MASQPPPPPKP. The tract at residues 1 to 71 is disordered; it reads MASQPPPPPK…SQQTGSNNVN (71 aa). Residues 1–136 are Peroxisomal matrix-facing; the sequence is MASQPPPPPK…SSRGAFQSIE (136 aa). Residues 61 to 71 show a composition bias toward polar residues; that stretch reads PSQQTGSNNVN. A helical transmembrane segment spans residues 137-157; sequence SIVHAFASVSMMMDATFSAVY. The segment at 147–235 is targeting to peroxisomes; the sequence is MMMDATFSAV…EDQATNSAKS (89 aa). Topologically, residues 158–176 are cytoplasmic; the sequence is NSFRAVLDVANHFSRLKIH. A helical transmembrane segment spans residues 177 to 194; it reads FTKVFSAFALVRTIRYLY. Residues 177–198 form an interaction with PEX19 region; it reads FTKVFSAFALVRTIRYLYRRLQ. Residues 195–235 are Peroxisomal matrix-facing; sequence RRLQWMMGLRRGSENEDLWAESEGTVACLSAEDQATNSAKS. A helical membrane pass occupies residues 236–256; that stretch reads WPIFLFFAVILGGPYLIWKLL. Residues 257-405 are Cytoplasmic-facing; the sequence is STHNDEVTDN…TGKNGDKQDL (149 aa). Residues 274 to 338 form the SH3 domain; the sequence is DDHVVARAEY…PANYVKILGK (65 aa). The residue at position 356 (S356) is a Phosphoserine.

The protein belongs to the peroxin-13 family. Interacts (via SH3 domain) with PEX14 (via SH3-binding motif); forming the PEX13-PEX14 docking complex. Interacts with PEX19.

It localises to the peroxisome membrane. Functionally, component of the PEX13-PEX14 docking complex, a translocon channel that specifically mediates the import of peroxisomal cargo proteins bound to PEX5 receptor. The PEX13-PEX14 docking complex forms a large import pore which can be opened to a diameter of about 9 nm. Mechanistically, PEX5 receptor along with cargo proteins associates with the PEX14 subunit of the PEX13-PEX14 docking complex in the cytosol, leading to the insertion of the receptor into the organelle membrane with the concomitant translocation of the cargo into the peroxisome matrix. Involved in the import of PTS1- and PTS2-type containing proteins. This chain is Peroxisomal membrane protein PEX13, found in Mus musculus (Mouse).